Reading from the N-terminus, the 376-residue chain is Serine-arginine protein 55 (376 aa).

The RRM 1 domain occupies 4 to 74 (SRVYVGGLPY…ERVVVEPARG (71 aa)). The segment at 73 to 114 (RGTARGSNRDRYDDRYGGRRGGGGGRYNEKNKNSRSSSRYGP) is disordered. The segment covering 79-89 (SNRDRYDDRYG) has biased composition (basic and acidic residues). The RRM 2 domain occupies 120–193 (YRLIVENLSS…RRIHLVEDRR (74 aa)). Serine 165 carries the post-translational modification Phosphoserine. Basic and acidic residues predominate over residues 185–194 (RIHLVEDRRG). Residues 185–376 (RIHLVEDRRG…PDRNNESMDD (192 aa)) are disordered. Residues 196–205 (RSGGGGGSGR) are compositionally biased toward gly residues. Basic residues-rich tracts occupy residues 215 to 263 (SRSR…SRSN) and 271 to 283 (SKSK…RSRS). Positions 284-304 (PKRERDSRSRSRSVSKRESRS) are enriched in basic and acidic residues.

The protein belongs to the splicing factor SR family. Extensively phosphorylated on serine residues in the RS domain.

The protein localises to the nucleus. Essential for development. May have a critical role in splicing or in controlling alternative splice site use of at least some pre-mRNA in vivo. Not required for all splicing. May play a general role in the condensation or decondensation of chromatin. In Drosophila melanogaster (Fruit fly), this protein is Serine-arginine protein 55 (B52).